Here is a 721-residue protein sequence, read N- to C-terminus: Catalase-peroxidase 1 (721 aa).

Positions Trp-98–Tyr-223 form a cross-link, tryptophyl-tyrosyl-methioninium (Trp-Tyr) (with M-249). Catalysis depends on His-99, which acts as the Proton acceptor. Residues Tyr-223–Met-249 constitute a cross-link (tryptophyl-tyrosyl-methioninium (Tyr-Met) (with W-98)). His-264 serves as a coordination point for heme b.

This sequence belongs to the peroxidase family. Peroxidase/catalase subfamily. In terms of assembly, homodimer or homotetramer. It depends on heme b as a cofactor. Post-translationally, formation of the three residue Trp-Tyr-Met cross-link is important for the catalase, but not the peroxidase activity of the enzyme.

The enzyme catalyses H2O2 + AH2 = A + 2 H2O. It catalyses the reaction 2 H2O2 = O2 + 2 H2O. In terms of biological role, bifunctional enzyme with both catalase and broad-spectrum peroxidase activity. This chain is Catalase-peroxidase 1, found in Legionella pneumophila (strain Paris).